We begin with the raw amino-acid sequence, 208 residues long: Outer-membrane lipoprotein carrier protein (208 aa).

The signal sequence occupies residues 1-23; it reads MKKTVKNLTALLTLALAAPWALA.

This sequence belongs to the LolA family. Monomer.

The protein resides in the periplasm. Participates in the translocation of lipoproteins from the inner membrane to the outer membrane. Only forms a complex with a lipoprotein if the residue after the N-terminal Cys is not an aspartate (The Asp acts as a targeting signal to indicate that the lipoprotein should stay in the inner membrane). This is Outer-membrane lipoprotein carrier protein from Actinobacillus succinogenes (strain ATCC 55618 / DSM 22257 / CCUG 43843 / 130Z).